The following is a 390-amino-acid chain: Transposase for insertion sequence element IS21 (390 aa).

Residues 5 to 66 (EDFYMIKQMR…PFMDYIDMRL (62 aa)) enclose the HTH IS21-type domain. The H-T-H motif DNA-binding region spans 20–39 (IVDIATQIGCSERTVRRYLK). Positions 111 to 285 (FETQPRYQLQ…TPEQRFALEQ (175 aa)) constitute an Integrase catalytic domain.

Belongs to the transposase IS21/IS408/IS1162 family.

Involved in the transposition of the insertion sequence. The polypeptide is Transposase for insertion sequence element IS21 (istA) (Pseudomonas aeruginosa).